The primary structure comprises 357 residues: Intracellular hyaluronan-binding protein 4 (357 aa).

Disordered stretches follow at residues 56 to 116, 150 to 186, and 313 to 357; these read VVAR…HKTA, ERPRGCGRGRGGMQGRGRGGGINKSFDGFDQRGKREF, and PGCG…PALT. Positions 96-115 are enriched in basic and acidic residues; sequence PKQEECGGKDNSRAEKEHKT. Residues 155-171 show a composition bias toward gly residues; the sequence is CGRGRGGMQGRGRGGGI. Basic and acidic residues predominate over residues 176 to 186; it reads DGFDQRGKREF. Over residues 348-357 the composition is skewed to acidic residues; sequence DDPEDFPALT.

This sequence belongs to the SERBP1-HABP4 family. Associates with ribosomes; promoting ribosome stabilization. Interacts with EEF2/eEF2; promoting ribosome stabilization.

It is found in the nucleus. The protein resides in the cytoplasm. It localises to the stress granule. Its subcellular location is the sarcoplasm. The protein localises to the nuclear body. It is found in the nucleolus. The protein resides in the nucleus speckle. It localises to the cajal body. Its subcellular location is the gem. Functionally, ribosome-binding protein that promotes ribosome hibernation, a process during which ribosomes are stabilized in an inactive state and preserved from proteasomal degradation. Acts via its association with EEF2/eEF2 factor at the A-site of the ribosome, promoting ribosome stabilization in an inactive state compatible with storage. Plays a key role in ribosome hibernation in the mature egg by promoting ribosome stabilization. Ribosomes, which are produced in large quantities during oogenesis, are stored and translationally repressed in the egg and early embryo. The protein is Intracellular hyaluronan-binding protein 4 of Gallus gallus (Chicken).